Here is a 251-residue protein sequence, read N- to C-terminus: 2-C-methyl-D-erythritol 4-phosphate cytidylyltransferase (251 aa).

It belongs to the IspD/TarI cytidylyltransferase family. IspD subfamily.

It catalyses the reaction 2-C-methyl-D-erythritol 4-phosphate + CTP + H(+) = 4-CDP-2-C-methyl-D-erythritol + diphosphate. It participates in isoprenoid biosynthesis; isopentenyl diphosphate biosynthesis via DXP pathway; isopentenyl diphosphate from 1-deoxy-D-xylulose 5-phosphate: step 2/6. Functionally, catalyzes the formation of 4-diphosphocytidyl-2-C-methyl-D-erythritol from CTP and 2-C-methyl-D-erythritol 4-phosphate (MEP). This is 2-C-methyl-D-erythritol 4-phosphate cytidylyltransferase from Cupriavidus pinatubonensis (strain JMP 134 / LMG 1197) (Cupriavidus necator (strain JMP 134)).